The chain runs to 382 residues: ATP phosphoribosyltransferase regulatory subunit (382 aa).

This sequence belongs to the class-II aminoacyl-tRNA synthetase family. HisZ subfamily. Heteromultimer composed of HisG and HisZ subunits.

Its subcellular location is the cytoplasm. It participates in amino-acid biosynthesis; L-histidine biosynthesis; L-histidine from 5-phospho-alpha-D-ribose 1-diphosphate: step 1/9. Functionally, required for the first step of histidine biosynthesis. May allow the feedback regulation of ATP phosphoribosyltransferase activity by histidine. This is ATP phosphoribosyltransferase regulatory subunit from Burkholderia pseudomallei (strain 668).